We begin with the raw amino-acid sequence, 398 residues long: Tryptophan synthase beta chain (398 aa).

The residue at position 87 (lysine 87) is an N6-(pyridoxal phosphate)lysine.

This sequence belongs to the TrpB family. Tetramer of two alpha and two beta chains. The cofactor is pyridoxal 5'-phosphate.

It carries out the reaction (1S,2R)-1-C-(indol-3-yl)glycerol 3-phosphate + L-serine = D-glyceraldehyde 3-phosphate + L-tryptophan + H2O. It participates in amino-acid biosynthesis; L-tryptophan biosynthesis; L-tryptophan from chorismate: step 5/5. Functionally, the beta subunit is responsible for the synthesis of L-tryptophan from indole and L-serine. This is Tryptophan synthase beta chain from Blochmanniella floridana.